The following is a 349-amino-acid chain: Protein-glutamate methylesterase/protein-glutamine glutaminase (349 aa).

Positions R5–M122 constitute a Response regulatory domain. A 4-aspartylphosphate modification is found at D56. A CheB-type methylesterase domain is found at L152–G344. Catalysis depends on residues S164, H190, and D286.

The protein belongs to the CheB family. In terms of processing, phosphorylated by CheA. Phosphorylation of the N-terminal regulatory domain activates the methylesterase activity.

It localises to the cytoplasm. The enzyme catalyses [protein]-L-glutamate 5-O-methyl ester + H2O = L-glutamyl-[protein] + methanol + H(+). It catalyses the reaction L-glutaminyl-[protein] + H2O = L-glutamyl-[protein] + NH4(+). Its function is as follows. Involved in chemotaxis. Part of a chemotaxis signal transduction system that modulates chemotaxis in response to various stimuli. Catalyzes the demethylation of specific methylglutamate residues introduced into the chemoreceptors (methyl-accepting chemotaxis proteins or MCP) by CheR. Also mediates the irreversible deamidation of specific glutamine residues to glutamic acid. This Salmonella choleraesuis (strain SC-B67) protein is Protein-glutamate methylesterase/protein-glutamine glutaminase.